The following is a 437-amino-acid chain: MPIITQILARQILDSRGNPTVEVDVYTESSFGRAAVPSGASTGVHEAVELRDGDAAVYLGKGVLKAVENVNTVINDALTGMLVTEQEEIDQALLDLDGTPNKSKLGANALLGVSMACAKAGAEYSGLPLYRYIGGTMASTLPVPMMNVLNGGAHADNTVDFQEFMIMPAGFDTFSDALRCGAEIFHALKALLKSKGLSTAVGDEGGFAPNLSSNEEAIELVIEAIGKAGYKVGSPTDKGGLGDAQVMIALDPASSEFYDSAKKRYVFKKSSKRELTSLEMAEYWEKWASDYPIISIEDGMAEDDWEGWKVLTEKIGSRVQLVGDDLFVTNSKRLAEGIERGVANSILVKVNQIGTLTETLDAIDLAKRNGYTSVISHRSGETEDSTIAQIAVATNAGQIKTGSLSRSDRMAKYNELLRIEEELGDQARYPGRKAFRV.

Glutamine 162 is a (2R)-2-phosphoglycerate binding site. The active-site Proton donor is the glutamate 204. Positions 251, 297, and 324 each coordinate Mg(2+). Positions 349, 378, 379, and 400 each coordinate (2R)-2-phosphoglycerate. Lysine 349 acts as the Proton acceptor in catalysis.

Belongs to the enolase family. Requires Mg(2+) as cofactor.

Its subcellular location is the cytoplasm. The protein resides in the secreted. It is found in the cell surface. The enzyme catalyses (2R)-2-phosphoglycerate = phosphoenolpyruvate + H2O. It participates in carbohydrate degradation; glycolysis; pyruvate from D-glyceraldehyde 3-phosphate: step 4/5. Functionally, catalyzes the reversible conversion of 2-phosphoglycerate (2-PG) into phosphoenolpyruvate (PEP). It is essential for the degradation of carbohydrates via glycolysis. In Pelodictyon phaeoclathratiforme (strain DSM 5477 / BU-1), this protein is Enolase.